We begin with the raw amino-acid sequence, 218 residues long: Cold-regulated protein 28 (218 aa).

2 disordered regions span residues 1-51 (MEND…ADSK) and 166-218 (TKHS…KPRT). Residues 20-37 (EASAESQSESTLSNSLDS) are compositionally biased toward low complexity. A compositionally biased stretch (basic and acidic residues) spans 186 to 207 (GEVSKKREREANNDDSSLKEDQ).

It localises to the nucleus. Together with COR27, involved in central circadian clock regulation and in flowering promotion, by binding to the chromatin of clock-associated evening genes TOC1, PRR5, ELF4 and cold-responsive genes in order to repress their transcription. Negative regulator of freezing tolerance. This chain is Cold-regulated protein 28, found in Arabidopsis thaliana (Mouse-ear cress).